Reading from the N-terminus, the 331-residue chain is MDQKRPQLKARVEGDYGEFVLEPLTRGYGVTIGNPIRRILMSSIPGTAVTSVYIEDVLHEFSTIPGVKEDVIRIILNLKELVVKFHAPGPKTLTLRAQGEGVVKASAFEVPSDAEIVNPDLTIATLAEDGKLVMEVRVEEGEGYVPADKHATKDRINSIPVDAVFSPVRRVAYHVENTRVGQQTDLDRLILRIWTDGSVGPQEALDRAVEILRDELTVFGNVETVSAAAPELPSVYTPAAPIVSGYDLPRQPELSINPQPYPADLDTPRVTLEGLGLTTRVLHSLKEEGIDSVDALCALSDRDLKKVPGIGERSLDEIKQQLAQFGLALRD.

Residues 1–223 (MDQKRPQLKA…DELTVFGNVE (223 aa)) form an alpha N-terminal domain (alpha-NTD) region. Residues 260 to 331 (PYPADLDTPR…LAQFGLALRD (72 aa)) are alpha C-terminal domain (alpha-CTD).

This sequence belongs to the RNA polymerase alpha chain family. In terms of assembly, homodimer. The RNAP catalytic core consists of 2 alpha, 1 beta, 1 beta' and 1 omega subunit. When a sigma factor is associated with the core the holoenzyme is formed, which can initiate transcription.

The catalysed reaction is RNA(n) + a ribonucleoside 5'-triphosphate = RNA(n+1) + diphosphate. In terms of biological role, DNA-dependent RNA polymerase catalyzes the transcription of DNA into RNA using the four ribonucleoside triphosphates as substrates. This Deinococcus geothermalis (strain DSM 11300 / CIP 105573 / AG-3a) protein is DNA-directed RNA polymerase subunit alpha.